Consider the following 271-residue polypeptide: DNA-directed RNA polymerase subunit Rpo3 (271 aa).

The protein belongs to the archaeal Rpo3/eukaryotic RPB3 RNA polymerase subunit family. Part of the RNA polymerase complex.

Its subcellular location is the cytoplasm. It carries out the reaction RNA(n) + a ribonucleoside 5'-triphosphate = RNA(n+1) + diphosphate. In terms of biological role, DNA-dependent RNA polymerase (RNAP) catalyzes the transcription of DNA into RNA using the four ribonucleoside triphosphates as substrates. This Picrophilus torridus (strain ATCC 700027 / DSM 9790 / JCM 10055 / NBRC 100828 / KAW 2/3) protein is DNA-directed RNA polymerase subunit Rpo3.